Reading from the N-terminus, the 74-residue chain is Large ribosomal subunit protein bL31 (74 aa).

Zn(2+)-binding residues include Cys16, Cys18, Cys38, and Cys41.

Belongs to the bacterial ribosomal protein bL31 family. Type A subfamily. As to quaternary structure, part of the 50S ribosomal subunit. It depends on Zn(2+) as a cofactor.

Functionally, binds the 23S rRNA. The chain is Large ribosomal subunit protein bL31 from Salinispora arenicola (strain CNS-205).